Reading from the N-terminus, the 717-residue chain is DNA-directed RNA polymerase subunit beta' (717 aa).

Residues C71, C73, C91, and C94 each coordinate Zn(2+). 3 residues coordinate Mg(2+): D481, D483, and D485.

Belongs to the RNA polymerase beta' chain family. RpoC1 subfamily. In terms of assembly, in plastids the minimal PEP RNA polymerase catalytic core is composed of four subunits: alpha, beta, beta', and beta''. When a (nuclear-encoded) sigma factor is associated with the core the holoenzyme is formed, which can initiate transcription. Mg(2+) serves as cofactor. It depends on Zn(2+) as a cofactor.

The protein resides in the plastid. Its subcellular location is the chloroplast. The catalysed reaction is RNA(n) + a ribonucleoside 5'-triphosphate = RNA(n+1) + diphosphate. In terms of biological role, DNA-dependent RNA polymerase catalyzes the transcription of DNA into RNA using the four ribonucleoside triphosphates as substrates. The polypeptide is DNA-directed RNA polymerase subunit beta' (Chlorokybus atmophyticus (Soil alga)).